The chain runs to 883 residues: Serine/threonine-protein phosphatase BSL1 homolog (883 aa).

4 Kelch repeats span residues 64 to 113 (ASSG…AVGT), 221 to 271 (MLLL…VFVG), 273 to 323 (RLHV…DHDA), and 341 to 387 (QIYI…NRNH). Disordered stretches follow at residues 381–402 (ENQNRNHNFNSDSPTTNNSTDK), 430–466 (SHASSEDSLSEGIGSESPLSETSPMPEDLDDGGSLEP), and 499–525 (NESRRMHPSSNDQSYPAKKALNRQRSP). Polar residues predominate over residues 385-399 (RNHNFNSDSPTTNNS). Mn(2+) contacts are provided by Asp-586, His-588, Asp-620, and Asn-652. The Proton donor role is filled by His-653. The Mn(2+) site is built by His-705 and His-784. Residues 861–883 (QRPPTPTRGRPQSASDRNSLAYI) form a disordered region. Residues 872-883 (QSASDRNSLAYI) are compositionally biased toward polar residues.

The protein belongs to the PPP phosphatase family. BSU subfamily. Interacts with the phosphorylated form of BSK3. Requires Mn(2+) as cofactor.

The protein localises to the nucleus. The enzyme catalyses O-phospho-L-seryl-[protein] + H2O = L-seryl-[protein] + phosphate. The catalysed reaction is O-phospho-L-threonyl-[protein] + H2O = L-threonyl-[protein] + phosphate. This is Serine/threonine-protein phosphatase BSL1 homolog (BSL1) from Oryza sativa subsp. japonica (Rice).